The following is a 149-amino-acid chain: Protegrin-1 (149 aa).

An N-terminal signal peptide occupies residues 1–29; that stretch reads METQRASLCLGRWSLWLLLLALVVPSASA. A propeptide spanning residues 30–130 is cleaved from the precursor; it reads QALSYREAVL…DITCNEVQGV (101 aa). The interval 61-80 is disordered; that stretch reads DQPPKADEDPGTPKPVSFTV. 4 disulfide bridges follow: Cys-85–Cys-96, Cys-107–Cys-124, Cys-136–Cys-145, and Cys-138–Cys-143. Arg-148 bears the Arginine amide mark.

The protein belongs to the cathelicidin family.

The protein localises to the secreted. In terms of biological role, microbicidal activity. Active against E.coli, Listeria monocytogenes and C.albicans, in vitro. This Sus scrofa (Pig) protein is Protegrin-1 (NPG1).